The primary structure comprises 426 residues: Histidinol dehydrogenase (426 aa).

NAD(+) is bound by residues Tyr-125, Gln-187, and Asn-210. The substrate site is built by Ser-233, Gln-255, and His-258. Zn(2+) is bound by residues Gln-255 and His-258. Residues Glu-323 and His-324 each act as proton acceptor in the active site. Substrate contacts are provided by His-324, Asp-357, Glu-411, and His-416. Asp-357 is a binding site for Zn(2+). Position 416 (His-416) interacts with Zn(2+).

The protein belongs to the histidinol dehydrogenase family. It depends on Zn(2+) as a cofactor.

The catalysed reaction is L-histidinol + 2 NAD(+) + H2O = L-histidine + 2 NADH + 3 H(+). Its pathway is amino-acid biosynthesis; L-histidine biosynthesis; L-histidine from 5-phospho-alpha-D-ribose 1-diphosphate: step 9/9. In terms of biological role, catalyzes the sequential NAD-dependent oxidations of L-histidinol to L-histidinaldehyde and then to L-histidine. This Methanothermobacter thermautotrophicus (strain ATCC 29096 / DSM 1053 / JCM 10044 / NBRC 100330 / Delta H) (Methanobacterium thermoautotrophicum) protein is Histidinol dehydrogenase (hisD).